The sequence spans 1525 residues: Receptor-type guanylate cyclase Gyc76C (1525 aa).

A signal peptide spans 1–19; it reads MTRWPFNLLLLLSVAVRDC. The Extracellular segment spans residues 20-493; sequence SNHRTVLTVG…KKDDTHYTST (474 aa). N-linked (GlcNAc...) asparagine glycosylation is found at N74, N184, N222, N338, N383, N394, N416, N428, and N458. The chain crosses the membrane as a helical span at residues 494 to 514; sequence VAAVVLGVLLFCSGVITMSIY. At 515 to 1525 the chain is on the cytoplasmic side; it reads RKWKIELEIE…AAARDRESIV (1011 aa). The region spanning 547–824 is the Protein kinase domain; that stretch reads PSKVSLMSAQ…SVIRNRLKKM (278 aa). Residues 553 to 561 and K581 contribute to the ATP site; that span reads MSAQSYGSR. One can recognise a Guanylate cyclase domain in the interval 896-1026; it reads TIYFSDIVGF…DTVNTASRME (131 aa). 3 residues coordinate Mg(2+): D901, I902, and D945. Disordered stretches follow at residues 1122 to 1168, 1192 to 1217, and 1256 to 1308; these read GSRR…NGLG, ETNE…LVRQ, and ESRS…VHSS. Positions 1147-1162 are enriched in basic and acidic residues; it reads ESPRMVSKRDRDRERP. The segment covering 1202-1212 has biased composition (gly residues); sequence GGSGGVSGSGS. Residues 1282–1308 show a composition bias toward polar residues; it reads LSKNNSRSLDTGVSLISGNPNGEVHSS.

Belongs to the adenylyl cyclase class-4/guanylyl cyclase family. Interacts with the semaphorin 1A receptor PlexA; PlexA enhances Gyc76C catalytic activity. Interacts with the PDZ domain-containing protein kermit; kermit increases cell surface expression of Gyc76C. As to expression, in the adult, widely distributed in the head and thorax with highest levels in the optic lobe and central brain and expression also detected in the retina. Expressed at similar levels in adult head and body. In females, highly expressed in oocytes with lower levels in the digestive tract. In mid-embryogenesis, enriched in the circular visceral mesoderm that overlies the migrating salivary gland and in the fat body that underlies the gland but at background levels in the gland itself. In late embryogenesis, detected in the mature salivary gland, in the somatic body wall muscles and the tendon cells to which the muscles attach, and in the constricting midgut. Also expressed in migrating tracheal cells at mid-embryogenesis and in the developed trachea at the end of embryogenesis with enrichment in the apical domains.

Its subcellular location is the cell membrane. The enzyme catalyses GTP = 3',5'-cyclic GMP + diphosphate. Functionally, guanylate cyclase involved in the production of the second messenger cGMP. Acts as a receptor for the NPLP1-4 peptide and modulates the innate immune IMD pathway in response to salt stress by inducing nuclear translocation of NF-kappa-B protein Rel which leads to increased expression of the antimicrobial peptide diptericin. Plays a role in Sema-1a-mediated axon repulsion which is required for the correct establishment of neuromuscular connectivity. Required in developing embryonic somatic muscle for correct patterning of ventral and lateral muscles and for localization of integrin beta-ps at developing dorsal muscle myotendinous junctions. Required for invagination, migration and lumen shape of the embryonic salivary gland by regulating the localization of the integrin-binding protein rhea/Talin to the visceral mesoderm surrounding the gland and maintaining the laminin matrix. Required in the developing wing to regulate extracellular matrix (ECM) organization by activating the cGMP-dependent protein kinase For which represses the activity of matrix metalloproteases such as Mmp2 and decreases ECM matrix reorganization. The sequence is that of Receptor-type guanylate cyclase Gyc76C from Drosophila melanogaster (Fruit fly).